We begin with the raw amino-acid sequence, 666 residues long: DNA ligase (666 aa).

NAD(+)-binding positions include aspartate 34–aspartate 38, serine 83–leucine 84, and glutamate 114. The N6-AMP-lysine intermediate role is filled by lysine 116. Positions 137, 174, 290, and 314 each coordinate NAD(+). Residues cysteine 408, cysteine 411, cysteine 424, and cysteine 429 each coordinate Zn(2+). The 83-residue stretch at serine 584 to glycine 666 folds into the BRCT domain.

The protein belongs to the NAD-dependent DNA ligase family. LigA subfamily. Mg(2+) is required as a cofactor. Requires Mn(2+) as cofactor.

The catalysed reaction is NAD(+) + (deoxyribonucleotide)n-3'-hydroxyl + 5'-phospho-(deoxyribonucleotide)m = (deoxyribonucleotide)n+m + AMP + beta-nicotinamide D-nucleotide.. In terms of biological role, DNA ligase that catalyzes the formation of phosphodiester linkages between 5'-phosphoryl and 3'-hydroxyl groups in double-stranded DNA using NAD as a coenzyme and as the energy source for the reaction. It is essential for DNA replication and repair of damaged DNA. This Coprothermobacter proteolyticus (strain ATCC 35245 / DSM 5265 / OCM 4 / BT) protein is DNA ligase.